Consider the following 387-residue polypeptide: Succinate--CoA ligase [ADP-forming] subunit beta (387 aa).

Positions 9 to 244 (KQLFAEYGIP…KTQEDETEVL (236 aa)) constitute an ATP-grasp domain. ATP contacts are provided by residues Lys46, 53-55 (GRG), Gly102, and Glu107. Mg(2+) is bound by residues Asn199 and Asp213. Residues Asn264 and 321-323 (GIV) each bind substrate.

This sequence belongs to the succinate/malate CoA ligase beta subunit family. As to quaternary structure, heterotetramer of two alpha and two beta subunits. Mg(2+) serves as cofactor.

The catalysed reaction is succinate + ATP + CoA = succinyl-CoA + ADP + phosphate. It catalyses the reaction GTP + succinate + CoA = succinyl-CoA + GDP + phosphate. The protein operates within carbohydrate metabolism; tricarboxylic acid cycle; succinate from succinyl-CoA (ligase route): step 1/1. Succinyl-CoA synthetase functions in the citric acid cycle (TCA), coupling the hydrolysis of succinyl-CoA to the synthesis of either ATP or GTP and thus represents the only step of substrate-level phosphorylation in the TCA. The beta subunit provides nucleotide specificity of the enzyme and binds the substrate succinate, while the binding sites for coenzyme A and phosphate are found in the alpha subunit. The polypeptide is Succinate--CoA ligase [ADP-forming] subunit beta (Xylella fastidiosa (strain M23)).